Reading from the N-terminus, the 399-residue chain is Cytohesin-3 (399 aa).

The stretch at 14-61 (EDLSLEEREELLDIRRRKKELIDDIERLKYEIAEVMTEIDNLTSVEES) forms a coiled coil. The region spanning 77 to 206 (FNMDPKKGIQ…IIMLNTSLHN (130 aa)) is the SEC7 domain. Residues 264–380 (NPDREGWLLK…WMKSIKASIS (117 aa)) form the PH domain. A 1,2-diacyl-sn-glycero-3-phospho-(1D-myo-inositol-3,4,5-trisphosphate) is bound by residues 273-280 (KLGGRVKT), Arg-284, Tyr-295, Arg-305, and Asn-354. The tract at residues 391 to 399 (RKRRIANKK) is C-terminal autoinhibitory region.

As to quaternary structure, interacts with TAMALIN. Interacts with FRMD4A. Interacts with FRMD4B.

The protein resides in the cytoplasm. It is found in the cytosol. The protein localises to the cell membrane. Its subcellular location is the cell junction. It localises to the adherens junction. The protein resides in the tight junction. In terms of biological role, promotes guanine-nucleotide exchange on ARF1. Promotes the activation of ARF factors through replacement of GDP with GTP. Plays a role in the epithelial polarization. This Mus musculus (Mouse) protein is Cytohesin-3 (Cyth3).